The sequence spans 534 residues: Bifunctional purine biosynthesis protein PurH (534 aa).

An MGS-like domain is found at 6 to 151 (TRLPVRRALI…KNHKDVAIVV (146 aa)).

The protein belongs to the PurH family.

It carries out the reaction (6R)-10-formyltetrahydrofolate + 5-amino-1-(5-phospho-beta-D-ribosyl)imidazole-4-carboxamide = 5-formamido-1-(5-phospho-D-ribosyl)imidazole-4-carboxamide + (6S)-5,6,7,8-tetrahydrofolate. It catalyses the reaction IMP + H2O = 5-formamido-1-(5-phospho-D-ribosyl)imidazole-4-carboxamide. It participates in purine metabolism; IMP biosynthesis via de novo pathway; 5-formamido-1-(5-phospho-D-ribosyl)imidazole-4-carboxamide from 5-amino-1-(5-phospho-D-ribosyl)imidazole-4-carboxamide (10-formyl THF route): step 1/1. The protein operates within purine metabolism; IMP biosynthesis via de novo pathway; IMP from 5-formamido-1-(5-phospho-D-ribosyl)imidazole-4-carboxamide: step 1/1. This is Bifunctional purine biosynthesis protein PurH from Stutzerimonas stutzeri (strain A1501) (Pseudomonas stutzeri).